Reading from the N-terminus, the 456-residue chain is Solute carrier family 49 member 4 homolog (456 aa).

Over 1-29 (MGLEWSSPGERQPLLFPGGPRSPRVFGRR) the chain is Cytoplasmic. The short motif at 14 to 15 (LL) is the Di-leucine motif; mediates lysosomal localization element. Residues 30-50 (WLVLLLFSVLAFLQGLVWNSW) form a helical membrane-spanning segment. Over 51 to 67 (GPIQISARTAYKFSGLD) the chain is Lumenal. The chain crosses the membrane as a helical span at residues 68-88 (IALLVLWGPIGFLPCFLFMWL). Residues 89-95 (MDNRGLR) are Cytoplasmic-facing. A helical transmembrane segment spans residues 96 to 116 (ITVLLTALLMVLGAGLRCVPV). The Lumenal portion of the chain corresponds to 117-123 (EDLAIRR). The chain crosses the membrane as a helical span at residues 124 to 144 (ILIHGGQLLNGFAGPTVMNAA). Topologically, residues 145–162 (PFLSTTWFAPDERATATA) are cytoplasmic. Residues 163 to 183 (IASMLNYLGGACAFLVGPLVV) form a helical membrane-spanning segment. Over 184 to 207 (PAPNSTSGLLLYSGSTDAIKDRIE) the chain is Lumenal. Residue asparagine 187 is glycosylated (N-linked (GlcNAc...) asparagine). A helical transmembrane segment spans residues 208-228 (AVMYAEFGIIFVVFAAILAYF). At 229–259 (PARPPVPPSVAAASRRLSYRTSIFRLLSNLR) the chain is on the cytoplasmic side. A helical transmembrane segment spans residues 260–280 (FLLIVLAYAIPLGFYSGWIGV). The Lumenal segment spans residues 281–292 (LDLILTPVHVTQ). The helical transmembrane segment at 293–313 (VDAGWVGFWSIVGGCVVGIAV) threads the bilayer. Topologically, residues 314–326 (GRFADSIRGVLKP) are cytoplasmic. Residues 327-347 (ILLLLFSGATLSATWFTLTFL) traverse the membrane as a helical segment. The Lumenal portion of the chain corresponds to 348 to 362 (SNVTHLPLTTATLYT). Asparagine 349 carries an N-linked (GlcNAc...) asparagine glycan. Residues 363–383 (SCILIGVFLNGTVPIFFELFV) traverse the membrane as a helical segment. Residues 384–392 (ETVYPIPEG) lie on the Cytoplasmic side of the membrane. Residues 393–413 (IACGVVTFLSNIFMGVLLVFL) form a helical membrane-spanning segment. Topologically, residues 414-420 (TMYQMEL) are lumenal. The chain crosses the membrane as a helical span at residues 421–441 (SWLNWCLTGSCFLSLFFIACF). Topologically, residues 442–456 (RESYDRLYLDVFVSV) are cytoplasmic.

The protein belongs to the major facilitator superfamily.

It localises to the lysosome membrane. The catalysed reaction is pyridoxine(out) + n H(+)(out) = pyridoxine(in) + n H(+)(in). In terms of biological role, mediates H(+)-dependent pyridoxine transport. This is Solute carrier family 49 member 4 homolog (slc49a4) from Xenopus laevis (African clawed frog).